The sequence spans 443 residues: Phosphoglucosamine mutase (443 aa).

Residue Ser-101 is the Phosphoserine intermediate of the active site. Residues Ser-101, Asp-240, Asp-242, and Asp-244 each contribute to the Mg(2+) site. The residue at position 101 (Ser-101) is a Phosphoserine.

It belongs to the phosphohexose mutase family. The cofactor is Mg(2+). In terms of processing, activated by phosphorylation.

It carries out the reaction alpha-D-glucosamine 1-phosphate = D-glucosamine 6-phosphate. Catalyzes the conversion of glucosamine-6-phosphate to glucosamine-1-phosphate. This chain is Phosphoglucosamine mutase, found in Psychromonas ingrahamii (strain DSM 17664 / CCUG 51855 / 37).